The sequence spans 81 residues: Costars family protein ABRACL (81 aa).

The residue at position 1 (M1) is an N-acetylmethionine.

It belongs to the costars family.

The chain is Costars family protein ABRACL (Abracl) from Mus musculus (Mouse).